The chain runs to 199 residues: Small ribosomal subunit protein eS6 (199 aa).

The span at 172-183 (KEQREKRSESLA) shows a compositional bias: basic and acidic residues. The segment at 172 to 199 (KEQREKRSESLAKKRSRLSAASKPSIAA) is disordered.

The protein belongs to the eukaryotic ribosomal protein eS6 family. Post-translationally, ribosomal protein S6 is the major substrate of protein kinases in eukaryote ribosomes.

In terms of biological role, component of the 40S small ribosomal subunit. Plays an important role in controlling cell growth and proliferation through the selective translation of particular classes of mRNA. The protein is Small ribosomal subunit protein eS6 (RPS6) of Nicotiana tabacum (Common tobacco).